The chain runs to 392 residues: Dihydroorotate dehydrogenase (quinone) (392 aa).

FMN is bound by residues 90–94 and Thr114; that span reads AGFDK. Residue Lys94 participates in substrate binding. 139–143 is a substrate binding site; it reads NRMGF. FMN-binding residues include Asn173 and Asn206. Residue Asn206 coordinates substrate. Catalysis depends on Ser209, which acts as the Nucleophile. Position 211 (Asn211) interacts with substrate. FMN-binding residues include Lys243 and Val271. Residue 272–273 participates in substrate binding; it reads NT. FMN is bound by residues Gly301, Gly330, and 351–352; that span reads YT.

The protein belongs to the dihydroorotate dehydrogenase family. Type 2 subfamily. In terms of assembly, monomer. Requires FMN as cofactor.

The protein localises to the cell membrane. The catalysed reaction is (S)-dihydroorotate + a quinone = orotate + a quinol. The protein operates within pyrimidine metabolism; UMP biosynthesis via de novo pathway; orotate from (S)-dihydroorotate (quinone route): step 1/1. Its function is as follows. Catalyzes the conversion of dihydroorotate to orotate with quinone as electron acceptor. The sequence is that of Dihydroorotate dehydrogenase (quinone) from Prochlorococcus marinus (strain MIT 9313).